A 257-amino-acid polypeptide reads, in one-letter code: UPF0246 protein Shewana3_3143 (257 aa).

This sequence belongs to the UPF0246 family.

The chain is UPF0246 protein Shewana3_3143 from Shewanella sp. (strain ANA-3).